The chain runs to 113 residues: Nucleoid-associated protein sync_0026 (113 aa).

Belongs to the YbaB/EbfC family. In terms of assembly, homodimer.

Its subcellular location is the cytoplasm. It localises to the nucleoid. Its function is as follows. Binds to DNA and alters its conformation. May be involved in regulation of gene expression, nucleoid organization and DNA protection. The protein is Nucleoid-associated protein sync_0026 of Synechococcus sp. (strain CC9311).